Here is a 338-residue protein sequence, read N- to C-terminus: Homoserine kinase (338 aa).

The protein belongs to the GHMP kinase family. Homoserine kinase subfamily.

It carries out the reaction L-homoserine + ATP = O-phospho-L-homoserine + ADP + H(+). It participates in amino-acid biosynthesis; L-threonine biosynthesis; L-threonine from L-aspartate: step 4/5. In terms of biological role, commits homoserine to the threonine biosynthesis pathway by catalyzing its O-phosphorylation. This is Homoserine kinase from Schizosaccharomyces pombe (strain 972 / ATCC 24843) (Fission yeast).